Here is a 173-residue protein sequence, read N- to C-terminus: 6,7-dimethyl-8-ribityllumazine synthase (173 aa).

5-amino-6-(D-ribitylamino)uracil contacts are provided by residues Tyr-34, 65–67 (ALE), and 94–96 (CVI). A (2S)-2-hydroxy-3-oxobutyl phosphate-binding site is contributed by 99–100 (ET). Residue His-102 is the Proton donor of the active site. 5-amino-6-(D-ribitylamino)uracil is bound at residue Asn-127. Arg-141 is a (2S)-2-hydroxy-3-oxobutyl phosphate binding site.

It belongs to the DMRL synthase family.

The enzyme catalyses (2S)-2-hydroxy-3-oxobutyl phosphate + 5-amino-6-(D-ribitylamino)uracil = 6,7-dimethyl-8-(1-D-ribityl)lumazine + phosphate + 2 H2O + H(+). Its pathway is cofactor biosynthesis; riboflavin biosynthesis; riboflavin from 2-hydroxy-3-oxobutyl phosphate and 5-amino-6-(D-ribitylamino)uracil: step 1/2. Functionally, catalyzes the formation of 6,7-dimethyl-8-ribityllumazine by condensation of 5-amino-6-(D-ribitylamino)uracil with 3,4-dihydroxy-2-butanone 4-phosphate. This is the penultimate step in the biosynthesis of riboflavin. This chain is 6,7-dimethyl-8-ribityllumazine synthase, found in Methylorubrum extorquens (strain CM4 / NCIMB 13688) (Methylobacterium extorquens).